The following is a 312-amino-acid chain: tRNA uridine(34) hydroxylase (312 aa).

The 95-residue stretch at 123-217 (SDPEVLLIDT…YLEEVPQEQS (95 aa)) folds into the Rhodanese domain. Cysteine 177 functions as the Cysteine persulfide intermediate in the catalytic mechanism. A compositionally biased stretch (basic and acidic residues) spans 282–293 (ARERQKQIELAR). Residues 282–312 (ARERQKQIELARQRNQPHPLGRDPRQSTLEN) form a disordered region.

The protein belongs to the TrhO family.

It catalyses the reaction uridine(34) in tRNA + AH2 + O2 = 5-hydroxyuridine(34) in tRNA + A + H2O. Functionally, catalyzes oxygen-dependent 5-hydroxyuridine (ho5U) modification at position 34 in tRNAs. This Pseudomonas paraeruginosa (strain DSM 24068 / PA7) (Pseudomonas aeruginosa (strain PA7)) protein is tRNA uridine(34) hydroxylase.